The following is a 319-amino-acid chain: G-protein coupled receptor 171 (319 aa).

Residues 1 to 21 (MTNSSTFCPVYRDLEPFTYFF) lie on the Extracellular side of the membrane. Asparagine 3 is a glycosylation site (N-linked (GlcNAc...) asparagine). The helical transmembrane segment at 22–42 (YLVFLIGIIGSCFATWAFIQK) threads the bilayer. Topologically, residues 43 to 48 (TTNHRC) are cytoplasmic. A helical transmembrane segment spans residues 49 to 69 (VSIYLINLLTADFLLTLALPV). Topologically, residues 70–89 (KIIVDLGVAPWKLRIFHCQV) are extracellular. A helical membrane pass occupies residues 90–110 (TACLIYINMYLSIIFLAFVSI). At 111–132 (DRCLQLIHSCKIYRIQEPGFAK) the chain is on the cytoplasmic side. The chain crosses the membrane as a helical span at residues 133–153 (MISAVVWLMVLLIMVPNMVIP). The Extracellular segment spans residues 154–181 (IKDIKEKSNVGCMEFKKEFGRNWHLLTN). The helical transmembrane segment at 182 to 202 (FICVAIFLNFSVIILISNFLA) threads the bilayer. The Cytoplasmic segment spans residues 203–224 (IRQLYRNRDNTNYPSVKSALLH). The helical transmembrane segment at 225 to 245 (ILLVTASYIICFVPYHAVRIP) threads the bilayer. Residues 246 to 268 (YTLSQTEVISDCSTRIALFKAKE) lie on the Extracellular side of the membrane. A helical transmembrane segment spans residues 269 to 289 (ATLLLAVSNLCFDPILYYHLS). Topologically, residues 290–319 (KAFRLKVTETFASPKKSKPLEERLRSENDV) are cytoplasmic.

The protein belongs to the G-protein coupled receptor 1 family. In terms of tissue distribution, highly expressed in hypothalamus, including the arcuate nucleus, paraventricular nucleus and dorsomedial hypothalamus. Expressed in periaqueductal gray (at protein level), found primarily in GABAergic neurons and to a lesser extent in glutamatergic neurons. Expressed in T cells and natural killer cells.

It localises to the cell membrane. Its function is as follows. G-protein coupled receptor for Big LEN, a 16-amino acid neuropeptide produced from the precursor protein, proSAAS (encoded by PCSK1N). Acts through a G(i)-alpha-mediated pathway in response to Big LEN. Big LEN-GPR171 system plays an important role in regulating feeding and metabolism. Also plays a role in modulating fear and anxiety-like behaviors in the basolateral amygdala. Big LEN-GPR171 modulates the mu-type opioid receptor signaling and antinociception. Acts as a negative regulator T cell function. The chain is G-protein coupled receptor 171 (Gpr171) from Mus musculus (Mouse).